The sequence spans 250 residues: Pyridoxine 5'-phosphate synthase (250 aa).

Residues N8 and R19 each contribute to the 3-amino-2-oxopropyl phosphate site. The Proton acceptor role is filled by H44. 2 residues coordinate 1-deoxy-D-xylulose 5-phosphate: R46 and H51. E76 (proton acceptor) is an active-site residue. A 1-deoxy-D-xylulose 5-phosphate-binding site is contributed by T106. H200 functions as the Proton donor in the catalytic mechanism. Residues D201 and 223-224 each bind 3-amino-2-oxopropyl phosphate; that span reads GH.

The protein belongs to the PNP synthase family. As to quaternary structure, homooctamer; tetramer of dimers.

The protein resides in the cytoplasm. The catalysed reaction is 3-amino-2-oxopropyl phosphate + 1-deoxy-D-xylulose 5-phosphate = pyridoxine 5'-phosphate + phosphate + 2 H2O + H(+). Its pathway is cofactor biosynthesis; pyridoxine 5'-phosphate biosynthesis; pyridoxine 5'-phosphate from D-erythrose 4-phosphate: step 5/5. Functionally, catalyzes the complicated ring closure reaction between the two acyclic compounds 1-deoxy-D-xylulose-5-phosphate (DXP) and 3-amino-2-oxopropyl phosphate (1-amino-acetone-3-phosphate or AAP) to form pyridoxine 5'-phosphate (PNP) and inorganic phosphate. The polypeptide is Pyridoxine 5'-phosphate synthase (Allorhizobium ampelinum (strain ATCC BAA-846 / DSM 112012 / S4) (Agrobacterium vitis (strain S4))).